The sequence spans 113 residues: Nucleoid-associated protein Syncc9902_0023 (113 aa).

Belongs to the YbaB/EbfC family. As to quaternary structure, homodimer.

Its subcellular location is the cytoplasm. It is found in the nucleoid. In terms of biological role, binds to DNA and alters its conformation. May be involved in regulation of gene expression, nucleoid organization and DNA protection. The protein is Nucleoid-associated protein Syncc9902_0023 of Synechococcus sp. (strain CC9902).